A 383-amino-acid polypeptide reads, in one-letter code: BRISC and BRCA1-A complex member 2 (383 aa).

Methionine 1 is subject to N-acetylmethionine. Phosphoserine is present on serine 2. UEV-like stretches follow at residues 30-147 and 275-364; these read DATN…TLLE and IAAF…RAKA.

The protein belongs to the BABAM2 family. Component of the ARISC complex, at least composed of UIMC1/RAP80, ABRAXAS1, BRCC3/BRCC36, BABAM2 and BABAM1/NBA1. Component of the BRCA1-A complex, at least composed of BRCA1, BARD1, UIMC1/RAP80, ABRAXAS1, BRCC3/BRCC36, BABAM2 and BABAM1/NBA1. In the BRCA1-A complex, interacts directly with ABRAXAS1, BRCC3/BRCC36 and BABAM1/NBA1. Binds polyubiquitin. Component of the BRISC complex, at least composed of ABRAXAS2, BRCC3/BRCC36, BABAM2 and BABAM1/NBA1. Identified in a complex with SHMT2 and the other subunits of the BRISC complex. Component of the BRCA1/BRCA2 containing complex (BRCC), which also contains BRCA1, BRCA2, BARD1, BRCC3/BRCC36 and RAD51. BRCC is a ubiquitin E3 ligase complex that enhances cellular survival following DNA damage. May interact with FAS and TNFRSF1A. In terms of tissue distribution, expressed in brain, heart, kidney, liver, lung, testis, germinal center B-cells and various mouse cell lines.

Its subcellular location is the cytoplasm. The protein resides in the nucleus. Its function is as follows. Component of the BRCA1-A complex, a complex that specifically recognizes 'Lys-63'-linked ubiquitinated histones H2A and H2AX at DNA lesions sites, leading to target the BRCA1-BARD1 heterodimer to sites of DNA damage at double-strand breaks (DSBs). The BRCA1-A complex also possesses deubiquitinase activity that specifically removes 'Lys-63'-linked ubiquitin on histones H2A and H2AX. In the BRCA1-A complex, it acts as an adapter that bridges the interaction between BABAM1/NBA1 and the rest of the complex, thereby being required for the complex integrity and modulating the E3 ubiquitin ligase activity of the BRCA1-BARD1 heterodimer. Probably also plays a role as a component of the BRISC complex, a multiprotein complex that specifically cleaves 'Lys-63'-linked ubiquitin. May regulate TNF-alpha signaling through its interactions with TNFRSF1A. Component of the BRCA1-A complex, a complex that specifically recognizes 'Lys-63'-linked ubiquitinated histones H2A and H2AX at DNA lesions sites, leading to target the BRCA1-BARD1 heterodimer to sites of DNA damage at double-strand breaks (DSBs). The BRCA1-A complex also possesses deubiquitinase activity that specifically removes 'Lys-63'-linked ubiquitin on histones H2A and H2AX. In the BRCA1-A complex, it acts as an adapter that bridges the interaction between BABAM1/NBA1 and the rest of the complex, thereby being required for the complex integrity and modulating the E3 ubiquitin ligase activity of the BRCA1-BARD1 heterodimer. Component of the BRISC complex, a multiprotein complex that specifically cleaves 'Lys-63'-linked ubiquitin in various substrates. Within the BRISC complex, acts as an adapter that bridges the interaction between BABAM1/NBA1 and the rest of the complex, thereby being required for the complex integrity. The BRISC complex is required for normal mitotic spindle assembly and microtubule attachment to kinetochores via its role in deubiquitinating NUMA1. The BRISC complex plays a role in interferon signaling via its role in the deubiquitination of the interferon receptor IFNAR1; deubiquitination increases IFNAR1 activity by enhancing its stability and cell surface expression. Down-regulates the response to bacterial lipopolysaccharide (LPS) via its role in IFNAR1 deubiquitination. May play a role in homeostasis or cellular differentiation in cells of neural, epithelial and germline origins. May also act as a death receptor-associated anti-apoptotic protein, which inhibits the mitochondrial apoptotic pathway. May regulate TNF-alpha signaling through its interactions with TNFRSF1A; however these effects may be indirect. The polypeptide is BRISC and BRCA1-A complex member 2 (Babam2) (Mus musculus (Mouse)).